A 136-amino-acid polypeptide reads, in one-letter code: Large ribosomal subunit protein uL16 (136 aa).

This sequence belongs to the universal ribosomal protein uL16 family. In terms of assembly, part of the 50S ribosomal subunit.

In terms of biological role, binds 23S rRNA and is also seen to make contacts with the A and possibly P site tRNAs. This is Large ribosomal subunit protein uL16 from Vibrio campbellii (strain ATCC BAA-1116).